We begin with the raw amino-acid sequence, 102 residues long: NADH-quinone oxidoreductase subunit K (102 aa).

3 helical membrane-spanning segments follow: residues 6-26 (LIGIMILAAGLFAVGVFGVLA), 30-50 (MLFQLVALEVALSGPALGFIA), and 63-83 (MFILVLTLAAAEVAVGLALFL).

The protein belongs to the complex I subunit 4L family. In terms of assembly, NDH-1 is composed of 14 different subunits. Subunits NuoA, H, J, K, L, M, N constitute the membrane sector of the complex.

The protein resides in the cell inner membrane. It carries out the reaction a quinone + NADH + 5 H(+)(in) = a quinol + NAD(+) + 4 H(+)(out). Its function is as follows. NDH-1 shuttles electrons from NADH, via FMN and iron-sulfur (Fe-S) centers, to quinones in the respiratory chain. The immediate electron acceptor for the enzyme in this species is believed to be ubiquinone. Couples the redox reaction to proton translocation (for every two electrons transferred, four hydrogen ions are translocated across the cytoplasmic membrane), and thus conserves the redox energy in a proton gradient. This chain is NADH-quinone oxidoreductase subunit K, found in Rhodopseudomonas palustris (strain TIE-1).